The following is a 2192-amino-acid chain: BEACH domain-containing protein lvsE (2192 aa).

4 disordered regions span residues 948-969, 996-1065, 1160-1303, and 1343-1363; these read STSL…TSTG, TTTT…DEPE, NESQ…NNLS, and DENG…SSSN. A compositionally biased stretch (low complexity) spans 996–1049; the sequence is TTTTTTTTTTTTTTSTTSNTGNDSPLSIESPISSPVLIENTTNTTNTTTTNTTN. Positions 1171 to 1187 are enriched in polar residues; it reads NIDNLNPNTGLPYNKST. Residues 1188–1231 are compositionally biased toward low complexity; it reads NNLSNVNNVNNNNNNNSNNINVSGNNTIGPSSSKSPLRNSRSMS. A compositionally biased stretch (polar residues) spans 1232-1243; the sequence is IGSSATKSPSRQ. Low complexity-rich tracts occupy residues 1253–1303 and 1350–1363; these read NNNS…NNLS and SSPN…SSSN. The BEACH-type PH domain occupies 1366–1491; it reads IEEEKFIGSW…ESIQIFNKIV (126 aa). Positions 1504–1795 constitute a BEACH domain; it reads DHPSKIIKKS…QLFSKPHPIR (292 aa). Low complexity predominate over residues 1823-1849; it reads GTINSSFSSTSTSTSTSSPPPSTLNSP. The tract at residues 1823–1851 is disordered; sequence GTINSSFSSTSTSTSTSSPPPSTLNSPQG. 3 WD repeats span residues 1973-2012, 2022-2061, and 2156-2192; these read FHHD…IKDS, SHDE…YQRS, and DSPA…VKDL.

The chain is BEACH domain-containing protein lvsE (lvsE) from Dictyostelium discoideum (Social amoeba).